A 209-amino-acid chain; its full sequence is N-(5'-phosphoribosyl)anthranilate isomerase (209 aa).

This sequence belongs to the TrpF family.

It catalyses the reaction N-(5-phospho-beta-D-ribosyl)anthranilate = 1-(2-carboxyphenylamino)-1-deoxy-D-ribulose 5-phosphate. It functions in the pathway amino-acid biosynthesis; L-tryptophan biosynthesis; L-tryptophan from chorismate: step 3/5. The polypeptide is N-(5'-phosphoribosyl)anthranilate isomerase (Pyrobaculum islandicum (strain DSM 4184 / JCM 9189 / GEO3)).